Here is a 342-residue protein sequence, read N- to C-terminus: Dihydroorotate dehydrogenase (quinone) (342 aa).

FMN contacts are provided by residues 61-65 and Thr-85; that span reads AGLDK. Lys-65 provides a ligand contact to substrate. Position 110 to 114 (110 to 114) interacts with substrate; that stretch reads NRMGF. FMN-binding residues include Asn-138 and Asn-171. Asn-171 serves as a coordination point for substrate. Residue Ser-174 is the Nucleophile of the active site. Asn-176 serves as a coordination point for substrate. FMN contacts are provided by Lys-216 and Thr-244. 245–246 lines the substrate pocket; it reads NT. FMN-binding positions include Gly-267, Gly-296, and 317–318; that span reads YS.

Belongs to the dihydroorotate dehydrogenase family. Type 2 subfamily. In terms of assembly, monomer. FMN is required as a cofactor.

The protein localises to the cell membrane. The catalysed reaction is (S)-dihydroorotate + a quinone = orotate + a quinol. It participates in pyrimidine metabolism; UMP biosynthesis via de novo pathway; orotate from (S)-dihydroorotate (quinone route): step 1/1. Catalyzes the conversion of dihydroorotate to orotate with quinone as electron acceptor. The chain is Dihydroorotate dehydrogenase (quinone) from Cellvibrio japonicus (strain Ueda107) (Pseudomonas fluorescens subsp. cellulosa).